The sequence spans 341 residues: KH domain-containing RNA-binding protein QKI (341 aa).

Positions 11–82 (PKPTPDYLMQ…PDAVGPIVQL (72 aa)) are qua1 domain; involved in homodimerization. The KH domain maps to 87 to 153 (YVPVKEYPDF…WEHLNEDLHV (67 aa)). A qua2 domain; involved in RNA binding region spans residues 182–213 (AAEGEDSLKKMQLMELAILNGTYRDANIKSPA). The residue at position 188 (Ser188) is a Phosphoserine. Omega-N-methylarginine is present on Arg227. At Arg242 the chain carries Asymmetric dimethylarginine; by CARM1; alternate. Omega-N-methylarginine; alternate is present on Arg242. Arg256 is modified (omega-N-methylarginine). Positions 276–279 (PPGP) match the SH3-binding motif. The short motif at 324–330 (RVHPYQR) is the Nuclear localization signal element.

This sequence belongs to the quaking family. In terms of assembly, homodimer; does not require RNA to homodimerize. Able to heterodimerize with BICC1. Post-translationally, methylated by PRMT1. In terms of processing, tyrosine phosphorylated at its C-terminus, probably by FYN. Phosphorylation leads to decreased mRNA-binding affinity, affecting transport and/or stabilization of MBP mRNA. Ubiquitinated by RNF6 in macrophages, leading to its degradation.

It is found in the nucleus. It localises to the cytoplasm. Functionally, RNA reader protein, which recognizes and binds specific RNAs, thereby regulating RNA metabolic processes, such as pre-mRNA splicing, circular RNA (circRNA) formation, mRNA export, mRNA stability and/or translation. Involved in various cellular processes, such as mRNA storage into stress granules, apoptosis, lipid deposition, interferon response, glial cell fate and development. Binds to the 5'-NACUAAY-N(1,20)-UAAY-3' RNA core sequence. Acts as a mRNA modification reader that specifically recognizes and binds mRNA transcripts modified by internal N(7)-methylguanine (m7G). Promotes the formation of circular RNAs (circRNAs) during the epithelial to mesenchymal transition and in cardiomyocytes: acts by binding to sites flanking circRNA-forming exons. CircRNAs are produced by back-splicing circularization of pre-mRNAs. Plays a central role in myelinization via 3 distinct mechanisms. First, acts by protecting and promoting stability of target mRNAs such as MBP, SIRT2 and CDKN1B, which promotes oligodendrocyte differentiation. Second, participates in mRNA transport by regulating the nuclear export of MBP mRNA. Finally, indirectly regulates mRNA splicing of MAG pre-mRNA during oligodendrocyte differentiation by acting as a negative regulator of MAG exon 12 alternative splicing: acts by binding to HNRNPA1 mRNA splicing factor, preventing its translation. Involved in microglia differentiation and remyelination by regulating microexon alternative splicing of the Rho GTPase pathway. Involved in macrophage differentiation: promotes monocyte differentiation by regulating pre-mRNA splicing in naive peripheral blood monocytes. Acts as an important regulator of muscle development: required for the contractile function of cardiomyocytes by regulating alternative splicing of cardiomyocyte transcripts. Acts as a negative regulator of thermogenesis by decreasing stability, nuclear export and translation of mRNAs encoding PPARGC1A and UCP1. Also required for visceral endoderm function and blood vessel development. May also play a role in smooth muscle development. In addition to its RNA-binding activity, also acts as a nuclear transcription coactivator for SREBF2/SREBP2. This is KH domain-containing RNA-binding protein QKI from Bos taurus (Bovine).